We begin with the raw amino-acid sequence, 420 residues long: Tyrosine--tRNA ligase (420 aa).

Residue tyrosine 38 participates in L-tyrosine binding. The 'HIGH' region motif lies at 43 to 52; sequence PTGDSLHIGH. Positions 169 and 173 each coordinate L-tyrosine. The short motif at 231-235 is the 'KMSKS' region element; sequence KFGKS. Lysine 234 lines the ATP pocket. Positions 353-419 constitute an S4 RNA-binding domain; the sequence is KNIVEFLVET…GKRKYTLVKI (67 aa).

It belongs to the class-I aminoacyl-tRNA synthetase family. TyrS type 1 subfamily. Homodimer.

The protein resides in the cytoplasm. It catalyses the reaction tRNA(Tyr) + L-tyrosine + ATP = L-tyrosyl-tRNA(Tyr) + AMP + diphosphate + H(+). Its function is as follows. Catalyzes the attachment of tyrosine to tRNA(Tyr) in a two-step reaction: tyrosine is first activated by ATP to form Tyr-AMP and then transferred to the acceptor end of tRNA(Tyr). The chain is Tyrosine--tRNA ligase from Lactobacillus johnsonii (strain CNCM I-12250 / La1 / NCC 533).